Consider the following 801-residue polypeptide: Phenylalanine--tRNA ligase beta subunit (801 aa).

The region spanning 39–152 (ARAFSGVVVG…TDAPIGTDIR (114 aa)) is the tRNA-binding domain. The 76-residue stretch at 407 to 482 (PARAPITLPI…RIYGYDNIPS (76 aa)) folds into the B5 domain. Mg(2+) contacts are provided by Asp460, Asp466, Glu469, and Glu470. The region spanning 706 to 799 (SKFPQVRRDI…LTVEHSAQLR (94 aa)) is the FDX-ACB domain.

The protein belongs to the phenylalanyl-tRNA synthetase beta subunit family. Type 1 subfamily. In terms of assembly, tetramer of two alpha and two beta subunits. It depends on Mg(2+) as a cofactor.

The protein localises to the cytoplasm. The catalysed reaction is tRNA(Phe) + L-phenylalanine + ATP = L-phenylalanyl-tRNA(Phe) + AMP + diphosphate + H(+). The chain is Phenylalanine--tRNA ligase beta subunit from Psychrobacter arcticus (strain DSM 17307 / VKM B-2377 / 273-4).